Here is a 526-residue protein sequence, read N- to C-terminus: Putative NipSnap protein K02D10.1 (526 aa).

This sequence belongs to the NipSnap family.

This Caenorhabditis elegans protein is Putative NipSnap protein K02D10.1.